The primary structure comprises 197 residues: Ribonuclease HII (197 aa).

An RNase H type-2 domain is found at 14-197; it reads EKIVGIDEAG…RSFNLGVNDD (184 aa). Residues Asp-20, Glu-21, and Asp-112 each contribute to the a divalent metal cation site.

Belongs to the RNase HII family. Requires Mn(2+) as cofactor. Mg(2+) serves as cofactor.

It is found in the cytoplasm. It catalyses the reaction Endonucleolytic cleavage to 5'-phosphomonoester.. Functionally, endonuclease that specifically degrades the RNA of RNA-DNA hybrids. In Sulfurihydrogenibium sp. (strain YO3AOP1), this protein is Ribonuclease HII.